We begin with the raw amino-acid sequence, 197 residues long: Recombination protein RecR (197 aa).

The segment at 55-70 (CVQCRDFTESEVCAIC) adopts a C4-type zinc-finger fold. In terms of domain architecture, Toprim spans 78–173 (QQLCVVESPA…RPSRLAQGMP (96 aa)).

It belongs to the RecR family.

Functionally, may play a role in DNA repair. It seems to be involved in an RecBC-independent recombinational process of DNA repair. It may act with RecF and RecO. The polypeptide is Recombination protein RecR (Xanthomonas campestris pv. campestris (strain 8004)).